A 315-amino-acid chain; its full sequence is Probable cell division protein WhiA (315 aa).

A DNA-binding region (H-T-H motif) is located at residues 280–313 (SLKELGEMLDPPVGKSGINHRLRKIEKIAEELRT).

It belongs to the WhiA family.

Functionally, involved in cell division and chromosome segregation. This is Probable cell division protein WhiA from Clostridium beijerinckii (strain ATCC 51743 / NCIMB 8052) (Clostridium acetobutylicum).